Here is a 708-residue protein sequence, read N- to C-terminus: Polyribonucleotide nucleotidyltransferase (708 aa).

Residues D485 and D491 each contribute to the Mg(2+) site. The KH domain occupies P552–I611. In terms of domain architecture, S1 motif spans G621–K689. Positions K689–K708 are disordered.

This sequence belongs to the polyribonucleotide nucleotidyltransferase family. Requires Mg(2+) as cofactor.

It localises to the cytoplasm. It carries out the reaction RNA(n+1) + phosphate = RNA(n) + a ribonucleoside 5'-diphosphate. Involved in mRNA degradation. Catalyzes the phosphorolysis of single-stranded polyribonucleotides processively in the 3'- to 5'-direction. This is Polyribonucleotide nucleotidyltransferase from Clostridium kluyveri (strain NBRC 12016).